We begin with the raw amino-acid sequence, 389 residues long: Phosphoglycerate kinase (389 aa).

Substrate contacts are provided by residues 21–23 (DLN), Arg-36, 59–62 (HLGR), Arg-112, and Arg-145. ATP contacts are provided by residues Lys-196, Glu-313, and 342-345 (GGDT).

The protein belongs to the phosphoglycerate kinase family. In terms of assembly, monomer.

It localises to the cytoplasm. It catalyses the reaction (2R)-3-phosphoglycerate + ATP = (2R)-3-phospho-glyceroyl phosphate + ADP. Its pathway is carbohydrate degradation; glycolysis; pyruvate from D-glyceraldehyde 3-phosphate: step 2/5. The sequence is that of Phosphoglycerate kinase from Histophilus somni (strain 2336) (Haemophilus somnus).